Consider the following 220-residue polypeptide: Uracil-DNA glycosylase (220 aa).

The Proton acceptor role is filled by aspartate 65.

The protein belongs to the uracil-DNA glycosylase (UDG) superfamily. UNG family.

The protein localises to the cytoplasm. It carries out the reaction Hydrolyzes single-stranded DNA or mismatched double-stranded DNA and polynucleotides, releasing free uracil.. Functionally, excises uracil residues from the DNA which can arise as a result of misincorporation of dUMP residues by DNA polymerase or due to deamination of cytosine. This is Uracil-DNA glycosylase from Bacteroides thetaiotaomicron (strain ATCC 29148 / DSM 2079 / JCM 5827 / CCUG 10774 / NCTC 10582 / VPI-5482 / E50).